Here is a 123-residue protein sequence, read N- to C-terminus: Histone H2B 2 (123 aa).

Positions 1–32 are disordered; the sequence is MAPPKPSAKGAKKAAKTVTKPKDGKKRRHARK. Residue Ser110 is glycosylated (O-linked (GlcNAc) serine). Lys118 participates in a covalent cross-link: Glycyl lysine isopeptide (Lys-Gly) (interchain with G-Cter in ubiquitin).

It belongs to the histone H2B family. The nucleosome is a histone octamer containing two molecules each of H2A, H2B, H3 and H4 assembled in one H3-H4 heterotetramer and two H2A-H2B heterodimers. The octamer wraps approximately 147 bp of DNA. Monoubiquitination of Lys-118 gives a specific tag for epigenetic transcriptional activation and is also prerequisite for histone H3 'Lys-4' and 'Lys-79' methylation. In terms of processing, glcNAcylation at Ser-110 promotes monoubiquitination of Lys-118. It fluctuates in response to extracellular glucose, and associates with transcribed genes.

It is found in the nucleus. It localises to the chromosome. In terms of biological role, core component of nucleosome. Nucleosomes wrap and compact DNA into chromatin, limiting DNA accessibility to the cellular machineries which require DNA as a template. Histones thereby play a central role in transcription regulation, DNA repair, DNA replication and chromosomal stability. DNA accessibility is regulated via a complex set of post-translational modifications of histones, also called histone code, and nucleosome remodeling. In Caenorhabditis elegans, this protein is Histone H2B 2 (his-4).